The following is a 468-amino-acid chain: ATP synthase subunit beta (468 aa).

Residue 155–162 (GGAGVGKT) participates in ATP binding.

It belongs to the ATPase alpha/beta chains family. In terms of assembly, F-type ATPases have 2 components, CF(1) - the catalytic core - and CF(0) - the membrane proton channel. CF(1) has five subunits: alpha(3), beta(3), gamma(1), delta(1), epsilon(1). CF(0) has three main subunits: a(1), b(2) and c(9-12). The alpha and beta chains form an alternating ring which encloses part of the gamma chain. CF(1) is attached to CF(0) by a central stalk formed by the gamma and epsilon chains, while a peripheral stalk is formed by the delta and b chains.

The protein localises to the cell membrane. It carries out the reaction ATP + H2O + 4 H(+)(in) = ADP + phosphate + 5 H(+)(out). Produces ATP from ADP in the presence of a proton gradient across the membrane. The catalytic sites are hosted primarily by the beta subunits. This is ATP synthase subunit beta from Streptococcus sanguinis (strain SK36).